The following is a 336-amino-acid chain: Gastrula zinc finger protein XlCGF57.1 (336 aa).

C2H2-type zinc fingers lie at residues 6-28, 34-56, 62-84, 90-112, 118-140, 146-168, 174-196, 202-224, 230-252, 258-280, and 286-308; these read YTCT…MKIH, FICT…MKTH, FTCT…LTIH, FSCT…MKTH, FTCT…MKTH, FTCT…LKIH, FTCT…MKIH, FSCT…LTMH, FTCT…TKIH, and FSCT…LKIH.

Belongs to the krueppel C2H2-type zinc-finger protein family.

The protein resides in the nucleus. Functionally, may be involved in transcriptional regulation. The polypeptide is Gastrula zinc finger protein XlCGF57.1 (Xenopus laevis (African clawed frog)).